The following is a 115-amino-acid chain: Large ribosomal subunit protein bL20c (115 aa).

The protein belongs to the bacterial ribosomal protein bL20 family.

It is found in the plastid. Its subcellular location is the chloroplast. In terms of biological role, binds directly to 23S ribosomal RNA and is necessary for the in vitro assembly process of the 50S ribosomal subunit. It is not involved in the protein synthesizing functions of that subunit. The polypeptide is Large ribosomal subunit protein bL20c (Emiliania huxleyi (Coccolithophore)).